A 205-amino-acid polypeptide reads, in one-letter code: Thymidylate kinase (205 aa).

11–18 (GPEGSGKT) lines the ATP pocket.

It belongs to the thymidylate kinase family.

The catalysed reaction is dTMP + ATP = dTDP + ADP. In terms of biological role, phosphorylation of dTMP to form dTDP in both de novo and salvage pathways of dTTP synthesis. The sequence is that of Thymidylate kinase from Clostridium novyi (strain NT).